The sequence spans 376 residues: Alpha-centractin (376 aa).

Position 1 is an N-acetylmethionine (M1).

It belongs to the actin family. ARP1 subfamily. In terms of assembly, part of the ACTR1A/ACTB filament around which the dynactin complex is built. The filament contains 8 copies of ACTR1A and 1 ACTB. Interacts with dynein and adapters such as BICD2. Interacts with BCCIP (isoform 2/alpha).

Its subcellular location is the cytoplasm. The protein localises to the cytoskeleton. The protein resides in the microtubule organizing center. It localises to the centrosome. It is found in the cell cortex. Functionally, part of the ACTR1A/ACTB filament around which the dynactin complex is built. The dynactin multiprotein complex activates the molecular motor dynein for ultra-processive transport along microtubules. In Canis lupus familiaris (Dog), this protein is Alpha-centractin (ACTR1A).